The chain runs to 355 residues: Phosphate acyltransferase (355 aa).

It belongs to the PlsX family. As to quaternary structure, homodimer. Probably interacts with PlsY.

The protein resides in the cytoplasm. The enzyme catalyses a fatty acyl-[ACP] + phosphate = an acyl phosphate + holo-[ACP]. The protein operates within lipid metabolism; phospholipid metabolism. Catalyzes the reversible formation of acyl-phosphate (acyl-PO(4)) from acyl-[acyl-carrier-protein] (acyl-ACP). This enzyme utilizes acyl-ACP as fatty acyl donor, but not acyl-CoA. This chain is Phosphate acyltransferase, found in Rhodospirillum centenum (strain ATCC 51521 / SW).